Consider the following 492-residue polypeptide: MMSASFKCPVSLSGVENICNGDKAIPGINSRTLFTGSSFLQRHHSANKIFFRTCGKKGSCCLFNIRAMAETDSGNGVPQLDISLSPRVAALKPSKTMAITDLATALKQAGVPVIGLAAGEPDFNTPDAVAEAGIKAIQDGYTRYTPNAGTMEIRTAICHKLKEENGLSYTPDQILVSNGAKQCIMAAAVLAVCSPGDEVIIPAPFWVSYTEMARLADATPVIIPTLLSDDFLLNPEVFSSKLNENSRLLILCSPSNPTGSVYPRELLEEIAKIVAKHPKLLVLSDEIYEHIMYPPAKHTSFASLPGMWERTLTVNGFSKAFAMTGWRLGYLAGPKHFVTACGRIQSQSTSGASSISQKAGVAALALGYAGSEAVSTMVKAYRERRDFLVQRLQAMEGVKLPVPQGAFYLFPDFSSYYGTEVEDFGVINGSEALCRFFLEKAQVALVPGDAFGNDDCIRISYAASLDTLRTAINNIEKSLLLLRPAAAASKAS.

Residues 1–66 (MMSASFKCPV…KGSCCLFNIR (66 aa)) constitute a chloroplast transit peptide. 3 residues coordinate L-aspartate: G119, W206, and N256. At K319 the chain carries N6-(pyridoxal phosphate)lysine. R458 serves as a coordination point for L-aspartate.

Belongs to the class-I pyridoxal-phosphate-dependent aminotransferase family. Homodimer. Pyridoxal 5'-phosphate is required as a cofactor.

It is found in the plastid. It localises to the chloroplast. It catalyses the reaction L-aspartate + 2-oxoglutarate = oxaloacetate + L-glutamate. In terms of biological role, prokaryotic-type aspartate aminotransferase. Specific for aspartate and no activity with glutamine, asparagine, alanine, histidine, leucine, methionine, lysine, arginine, tryptophan, tyrosine, phenylalanine or kynurenine. This chain is Aspartate aminotransferase (AAT), found in Pinus pinaster (Maritime pine).